Consider the following 580-residue polypeptide: Negative elongation factor B (580 aa).

Position 519 is an N6-acetyllysine (Lys-519). The interval 548 to 580 (LEQLDHRKPSPAQAAETPALELPLPSVPAPAPL) is disordered. Phosphoserine is present on Ser-557.

This sequence belongs to the NELF-B family. As to quaternary structure, the NELF complex is composed of NELFA, NELFB, NELFCD (isoform NELF-C or isoform NELF-D) and NELFE; the N-terminus of NELFB binds to the NELFA:NELFCD subcomplex. Binds RNA which may help to stabilize the NELF complex on nucleic acid. Interacts with the first BRCT repeat of BRCA1. Interacts with KIAA1191. Interacts with NELFE. In terms of tissue distribution, widely expressed. Expressed in heart, brain, lung, placenta, liver, skeletal muscle, kidney and pancreas.

It localises to the nucleus. Its function is as follows. Essential component of the NELF complex, a complex that negatively regulates the elongation of transcription by RNA polymerase II. The NELF complex, which acts via an association with the DSIF complex and causes transcriptional pausing, is counteracted by the P-TEFb kinase complex. May be able to induce chromatin unfolding. Essential for early embryogenesis; plays an important role in maintaining the undifferentiated state of embryonic stem cells (ESCs) by preventing unscheduled expression of developmental genes. Plays a key role in establishing the responsiveness of stem cells to developmental cues; facilitates plasticity and cell fate commitment in ESCs by establishing the appropriate expression level of signaling molecules. Supports the transcription of genes involved in energy metabolism in cardiomyocytes; facilitates the association of transcription initiation factors with the promoters of the metabolism-related genes. In terms of biological role, (Microbial infection) The NELF complex is involved in HIV-1 latency possibly involving recruitment of PCF11 to paused RNA polymerase II. In vitro, binds weakly to the HIV-1 TAR RNA which is located in the long terminal repeat (LTR) of HIV-1. This chain is Negative elongation factor B (NELFB), found in Homo sapiens (Human).